The primary structure comprises 414 residues: CCA-adding enzyme (414 aa).

2 residues coordinate ATP: glycine 8 and arginine 11. CTP-binding residues include glycine 8 and arginine 11. Residues aspartate 21 and aspartate 23 each contribute to the Mg(2+) site. Residues arginine 92, arginine 138, and arginine 141 each contribute to the ATP site. CTP contacts are provided by arginine 92, arginine 138, and arginine 141.

Belongs to the tRNA nucleotidyltransferase/poly(A) polymerase family. Bacterial CCA-adding enzyme type 2 subfamily. Mg(2+) serves as cofactor.

It catalyses the reaction a tRNA precursor + 2 CTP + ATP = a tRNA with a 3' CCA end + 3 diphosphate. It carries out the reaction a tRNA with a 3' CCA end + 2 CTP + ATP = a tRNA with a 3' CCACCA end + 3 diphosphate. In terms of biological role, catalyzes the addition and repair of the essential 3'-terminal CCA sequence in tRNAs without using a nucleic acid template. Adds these three nucleotides in the order of C, C, and A to the tRNA nucleotide-73, using CTP and ATP as substrates and producing inorganic pyrophosphate. tRNA 3'-terminal CCA addition is required both for tRNA processing and repair. Also involved in tRNA surveillance by mediating tandem CCA addition to generate a CCACCA at the 3' terminus of unstable tRNAs. While stable tRNAs receive only 3'-terminal CCA, unstable tRNAs are marked with CCACCA and rapidly degraded. This is CCA-adding enzyme from Buchnera aphidicola subsp. Cinara cedri (strain Cc).